Consider the following 155-residue polypeptide: 2-C-methyl-D-erythritol 2,4-cyclodiphosphate synthase (155 aa).

The a divalent metal cation site is built by Asp-10, His-12, and His-46. 10 to 12 (DSH) is a binding site for 4-CDP-2-C-methyl-D-erythritol 2-phosphate. 4-CDP-2-C-methyl-D-erythritol 2-phosphate-binding positions include 60–62 (DIG), 65–69 (FDEND), and Lys-140.

It belongs to the IspF family. As to quaternary structure, homotrimer. The cofactor is a divalent metal cation.

It carries out the reaction 4-CDP-2-C-methyl-D-erythritol 2-phosphate = 2-C-methyl-D-erythritol 2,4-cyclic diphosphate + CMP. It participates in isoprenoid biosynthesis; isopentenyl diphosphate biosynthesis via DXP pathway; isopentenyl diphosphate from 1-deoxy-D-xylulose 5-phosphate: step 4/6. Functionally, involved in the biosynthesis of isopentenyl diphosphate (IPP) and dimethylallyl diphosphate (DMAPP), two major building blocks of isoprenoid compounds. Catalyzes the conversion of 4-diphosphocytidyl-2-C-methyl-D-erythritol 2-phosphate (CDP-ME2P) to 2-C-methyl-D-erythritol 2,4-cyclodiphosphate (ME-CPP) with a corresponding release of cytidine 5-monophosphate (CMP). This Mycoplasmoides gallisepticum (strain R(low / passage 15 / clone 2)) (Mycoplasma gallisepticum) protein is 2-C-methyl-D-erythritol 2,4-cyclodiphosphate synthase.